The sequence spans 193 residues: Ribosomal RNA small subunit methyltransferase G (193 aa).

S-adenosyl-L-methionine contacts are provided by residues G64, L69, 113 to 114, and R126; that span reads IE.

This sequence belongs to the methyltransferase superfamily. RNA methyltransferase RsmG family.

The protein resides in the cytoplasm. It carries out the reaction guanosine(527) in 16S rRNA + S-adenosyl-L-methionine = N(7)-methylguanosine(527) in 16S rRNA + S-adenosyl-L-homocysteine. Functionally, specifically methylates the N7 position of guanine in position 527 of 16S rRNA. This Rickettsia massiliae (strain Mtu5) protein is Ribosomal RNA small subunit methyltransferase G.